The primary structure comprises 544 residues: Aspartokinase (544 aa).

One can recognise an ACT domain in the interval 463-535; sequence LVGKQMVNFI…SAIGDSSAVD (73 aa).

The protein belongs to the aspartokinase family.

It carries out the reaction L-aspartate + ATP = 4-phospho-L-aspartate + ADP. Its pathway is amino-acid biosynthesis; L-methionine biosynthesis via de novo pathway; L-homoserine from L-aspartate: step 1/3. The protein operates within amino-acid biosynthesis; L-threonine biosynthesis; L-threonine from L-aspartate: step 1/5. Its function is as follows. Phosphorylates aspartate, the first step in the biosynthesis of amino acids that derive from aspartate (the aspartate family of amino acids), including methioinine and threonine, the latter of which is a precursor to isoleucine. The chain is Aspartokinase from Candida albicans (strain SC5314 / ATCC MYA-2876) (Yeast).